The chain runs to 150 residues: Cell division protein SepF (150 aa).

This sequence belongs to the SepF family. Homodimer. Interacts with FtsZ.

The protein localises to the cytoplasm. In terms of biological role, cell division protein that is part of the divisome complex and is recruited early to the Z-ring. Probably stimulates Z-ring formation, perhaps through the cross-linking of FtsZ protofilaments. Its function overlaps with FtsA. The polypeptide is Cell division protein SepF (Clostridium botulinum (strain Kyoto / Type A2)).